Reading from the N-terminus, the 520-residue chain is Amine oxidase [flavin-containing] B (520 aa).

Topologically, residues methionine 1 to valine 489 are cytoplasmic. Lysine 52 carries the N6-acetyllysine modification. At cysteine 397 the chain carries S-8alpha-FAD cysteine. The chain crosses the membrane as a helical; Anchor for type IV membrane protein span at residues proline 490–leucine 516. Residues leucine 517–isoleucine 520 are Mitochondrial intermembrane-facing.

It belongs to the flavin monoamine oxidase family. As to quaternary structure, monomer, homo- or heterodimer (containing two subunits of similar size). Each subunit contains a covalently bound flavin. Enzymatically active as monomer. The cofactor is FAD.

The protein resides in the mitochondrion outer membrane. The enzyme catalyses a secondary aliphatic amine + O2 + H2O = a primary amine + an aldehyde + H2O2. It catalyses the reaction (R)-adrenaline + O2 + H2O = (R)-3,4-dihydroxymandelaldehyde + methylamine + H2O2. The catalysed reaction is a primary methyl amine + O2 + H2O = an aldehyde + H2O2 + NH4(+). It carries out the reaction benzylamine + O2 + H2O = benzaldehyde + H2O2 + NH4(+). The enzyme catalyses dopamine + O2 + H2O = 3,4-dihydroxyphenylacetaldehyde + H2O2 + NH4(+). It catalyses the reaction tyramine + O2 + H2O = (4-hydroxyphenyl)acetaldehyde + H2O2 + NH4(+). The catalysed reaction is (R)-noradrenaline + O2 + H2O = (R)-3,4-dihydroxymandelaldehyde + H2O2 + NH4(+). It carries out the reaction 2-phenylethylamine + O2 + H2O = 2-phenylacetaldehyde + H2O2 + NH4(+). The enzyme catalyses N-acetylputrescine + O2 + H2O = 4-acetamidobutanal + H2O2 + NH4(+). Functionally, catalyzes the oxidative deamination of primary and some secondary amines such as neurotransmitters, and exogenous amines including the tertiary amine, neurotoxin 1-methyl-4-phenyl-1,2,3,6-tetrahydropyridine (MPTP), with concomitant reduction of oxygen to hydrogen peroxide and participates in the metabolism of neuroactive and vasoactive amines in the central nervous system and peripheral tissues. Preferentially degrades benzylamine and phenylethylamine. This is Amine oxidase [flavin-containing] B from Cavia porcellus (Guinea pig).